The primary structure comprises 371 residues: Cytochrome b (371 aa).

Helical transmembrane passes span Phe-25 to Val-45, Trp-69 to Ile-90, Trp-105 to Leu-125, and Phe-170 to Ile-190. Residues His-75 and His-89 each contribute to the heme b site. The heme b site is built by His-174 and His-188. His-193 lines the a ubiquinone pocket. The next 4 helical transmembrane spans lie at His-218 to Phe-238, Leu-280 to His-300, Phe-312 to Thr-332, and Phe-339 to Pro-358.

Belongs to the cytochrome b family. As to quaternary structure, the cytochrome bc1 complex contains 3 respiratory subunits (MT-CYB, CYC1 and UQCRFS1), 2 core proteins (UQCRC1 and UQCRC2) and probably 6 low-molecular weight proteins. Requires heme b as cofactor.

Its subcellular location is the mitochondrion inner membrane. In terms of biological role, component of the ubiquinol-cytochrome c reductase complex (complex III or cytochrome b-c1 complex) that is part of the mitochondrial respiratory chain. The b-c1 complex mediates electron transfer from ubiquinol to cytochrome c. Contributes to the generation of a proton gradient across the mitochondrial membrane that is then used for ATP synthesis. The protein is Cytochrome b (MT-CYB) of Leiopython albertisii (Northern white-lipped python).